A 100-amino-acid polypeptide reads, in one-letter code: Cystatin-B (100 aa).

The Cystatin domain maps to 6 to 88 (GGISAPLDAD…GGGLELSGMQ (83 aa)). The Secondary area of contact motif lies at 48–52 (QIVSG).

Belongs to the cystatin family. As to expression, widely expressed. Highly expressed in liver and to a lesser extent in spleen, gill, brain, intestine, kidney, head kidney and blood. Lowest level in muscle.

Its subcellular location is the cytoplasm. Functionally, thiol protease inhibitor. Has papain inhibitory activity in vitro. May be involved in immune responses against invading Gram-negative bacteria. In Oplegnathus fasciatus (Barred knifejaw), this protein is Cystatin-B.